We begin with the raw amino-acid sequence, 984 residues long: Glutamate [NMDA] receptor subunit 1 (984 aa).

An N-terminal signal peptide occupies residues 1–24 (MAAAFAYRWLLCAAGIVNVLPIGA). Topologically, residues 25–570 (QRHTASDNPS…TLVSFLQPFS (546 aa)) are extracellular. Residues asparagine 255, asparagine 311, asparagine 342, asparagine 394, asparagine 451, asparagine 478, and asparagine 498 are each glycosylated (N-linked (GlcNAc...) asparagine). Residues 527–529 (PLT) and arginine 534 each bind glycine. Residues 571–591 (NTLWILVMVSVHVVALVLYLL) form a helical membrane-spanning segment. Over 592 to 648 (DRFSPFGRFKLSHSDSNEEKALNLSSAVWFAWGVLLNSGIGEGTPRSFSARVLGMVW) the chain is Cytoplasmic. Residues 649–669 (AGFAMIIVASYTANLAAFLVL) traverse the membrane as a helical segment. Residues 670 to 828 (ERPKTKLSGI…KTPNTLGLKN (159 aa)) are Extracellular-facing. Asparagine 690 carries N-linked (GlcNAc...) asparagine glycosylation. Residues serine 700 and aspartate 744 each coordinate glycine. A helical transmembrane segment spans residues 829 to 849 (MAGVFILVGVGIAGGVGLIII). Residues 850-984 (EVIYKKHQVK…YTSDVSHLVV (135 aa)) are Cytoplasmic-facing. The interval 947 to 984 (KSGLVPPALGLGKTRPQQNPLPPRYSPGYTSDVSHLVV) is disordered. Positions 974–984 (GYTSDVSHLVV) are enriched in polar residues.

The protein belongs to the glutamate-gated ion channel (TC 1.A.10.1) family. Forms a heteromeric NMDA channel with Nmdar2.

The protein resides in the cell membrane. It localises to the postsynaptic cell membrane. Its subcellular location is the postsynaptic density. Functionally, NMDA receptor subtype of glutamate-gated ion channels with high calcium permeability and voltage-dependent sensitivity to magnesium. Mediated by glycine. This protein plays a key role in synaptic plasticity, synaptogenesis, excitotoxicity, memory acquisition and learning. It mediates neuronal functions in glutamate neurotransmission. Is involved in the cell surface targeting of NMDA receptors. Plays a role in associative learning and in long-term memory consolidation. This chain is Glutamate [NMDA] receptor subunit 1, found in Drosophila virilis (Fruit fly).